A 339-amino-acid polypeptide reads, in one-letter code: Terpene synthase 7 (339 aa).

The DDxx(x)D/E motif motif lies at Asp79–Ser84. The NDxxSxxxD/E motif motif lies at Asn219–Glu227.

It belongs to the terpene synthase family.

The catalysed reaction is (2E,6E)-farnesyl diphosphate = (-)-beta-barbatene + diphosphate. In terms of biological role, terpene synthase that converts its substrate farnesyl diphosphate (FPP) into the sesquiterpene beta-barbatene. The protein is Terpene synthase 7 of Dictyostelium discoideum (Social amoeba).